We begin with the raw amino-acid sequence, 314 residues long: Small ribosomal subunit biogenesis GTPase RsgA (314 aa).

The region spanning serine 78–phenylalanine 238 is the CP-type G domain. Residues asparagine 127–aspartate 130 and glycine 180–threonine 188 contribute to the GTP site. Zn(2+)-binding residues include cysteine 262, cysteine 267, histidine 269, and cysteine 275.

Belongs to the TRAFAC class YlqF/YawG GTPase family. RsgA subfamily. In terms of assembly, monomer. Associates with 30S ribosomal subunit, binds 16S rRNA. Requires Zn(2+) as cofactor.

It localises to the cytoplasm. In terms of biological role, one of several proteins that assist in the late maturation steps of the functional core of the 30S ribosomal subunit. Helps release RbfA from mature subunits. May play a role in the assembly of ribosomal proteins into the subunit. Circularly permuted GTPase that catalyzes slow GTP hydrolysis, GTPase activity is stimulated by the 30S ribosomal subunit. The sequence is that of Small ribosomal subunit biogenesis GTPase RsgA from Nitrosomonas europaea (strain ATCC 19718 / CIP 103999 / KCTC 2705 / NBRC 14298).